A 103-amino-acid chain; its full sequence is Early nodulin-12 (103 aa).

Positions 1-24 (MASFSLSILVFFFSALVLVPQGFA) are cleaved as a signal peptide. 2 repeat units span residues 34–38 (PPQTK) and 39–43 (PPVNK). The segment at 34–88 (PPQTKPPVNKPSHKEPPVNKPPHKEPPVHKPPHKDPPVNKPPQKESPVHKPPRKE) is 11 X 5 AA approximate tandem repeats of P-P-[QVHR]-[TNKH]-[KED]. A disordered region spans residues 34-103 (PPQTKPPVNK…HPPAEDNIHF (70 aa)). The 3; approximate repeat unit spans residues 44-48 (PSHKE). The span at 45 to 103 (SHKEPPVNKPPHKEPPVHKPPHKDPPVNKPPQKESPVHKPPRKESPTHRHPPAEDNIHF) shows a compositional bias: basic and acidic residues. 6 tandem repeats follow at residues 49-53 (PPVNK), 54-58 (PPHKE), 59-63 (PPVHK), 64-68 (PPHKD), 69-73 (PPVNK), and 74-78 (PPQKE). The stretch at 79–83 (SPVHK) is one 10; approximate repeat. Residues 84-88 (PPRKE) form repeat 11.

The protein belongs to the plant proline-rich protein superfamily. ENOD12 family. As to expression, root nodules.

It is found in the secreted. It localises to the cell wall. Involved in the infection process during the plant-rhizobium interaction. This chain is Early nodulin-12 (ENOD12), found in Medicago truncatula (Barrel medic).